The chain runs to 199 residues: Tegument protein UL14 homolog (199 aa).

Over residues 176 to 191 the composition is skewed to polar residues; the sequence is TDMNQMQPQPISKNEN. Residues 176–199 form a disordered region; that stretch reads TDMNQMQPQPISKNENPPTPHTDV.

The protein belongs to the alphaherpesvirinae HHV-1 UL14 protein family.

It localises to the virion tegument. The protein localises to the host cytoplasm. Its subcellular location is the host nucleus. Functionally, contributes to the nuclear transport of the viral transcriptional activator VP16 homolog during the early phase of infection. Therefore, participates indirectly in the regulation of the immediate-early gene expression. Additionally, seems to be important for efficient nuclear targeting of capsids. The sequence is that of Tegument protein UL14 homolog from Varicella-zoster virus (strain Dumas) (HHV-3).